The following is a 500-amino-acid chain: Probable E3 ubiquitin-protein ligase ARI16 (500 aa).

Positions 74 to 288 (NSNSSSADRE…QGNWNCSPVA (215 aa)) are TRIAD supradomain. Residues 78-130 (SSADRETGDGDYLVSTPFCSHKFSTTCWSEYLSDALKKNKEQRGLISCLSQDC) form an RING-type 1 zinc finger. Residues cysteine 96, histidine 98, cysteine 125, cysteine 130, cysteine 169, cysteine 174, cysteine 194, cysteine 196, cysteine 201, cysteine 204, histidine 209, cysteine 214, cysteine 241, cysteine 244, cysteine 261, cysteine 263, cysteine 268, cysteine 271, histidine 278, and cysteine 284 each coordinate Zn(2+). Residues 148–214 (EMYENYILES…GLESHRPVSC (67 aa)) form an IBR-type zinc finger. The RING-type 2; atypical zinc finger occupies 241 to 271 (CPKCKIPVQQNGDPNYRLINCICSNNFCWIC). A RanBP2-type zinc finger spans residues 453 to 483 (EPGSRWFCDRCTFENSWVDKQCKMCFFPLDY).

Belongs to the RBR family. Ariadne subfamily. Requires Zn(2+) as cofactor. In terms of tissue distribution, preferentially expressed in green siliques.

It carries out the reaction [E2 ubiquitin-conjugating enzyme]-S-ubiquitinyl-L-cysteine + [acceptor protein]-L-lysine = [E2 ubiquitin-conjugating enzyme]-L-cysteine + [acceptor protein]-N(6)-ubiquitinyl-L-lysine.. The protein operates within protein modification; protein ubiquitination. Might act as an E3 ubiquitin-protein ligase, or as part of E3 complex, which accepts ubiquitin from specific E2 ubiquitin-conjugating enzymes and then transfers it to substrates. This Arabidopsis thaliana (Mouse-ear cress) protein is Probable E3 ubiquitin-protein ligase ARI16 (ARI16).